Here is a 765-residue protein sequence, read N- to C-terminus: Periplasmic beta-glucosidase (765 aa).

A signal peptide spans 1-20 (MKWLCSVGVAVSLAMQPALA). Asp287 is an active-site residue.

Belongs to the glycosyl hydrolase 3 family.

It is found in the periplasm. The enzyme catalyses Hydrolysis of terminal, non-reducing beta-D-glucosyl residues with release of beta-D-glucose.. The polypeptide is Periplasmic beta-glucosidase (bglX) (Salmonella typhimurium (strain LT2 / SGSC1412 / ATCC 700720)).